The sequence spans 220 residues: UPF0502 protein VV2_0756 (220 aa).

The protein belongs to the UPF0502 family.

This Vibrio vulnificus (strain CMCP6) protein is UPF0502 protein VV2_0756.